A 185-amino-acid chain; its full sequence is Ribosome-recycling factor (185 aa).

Belongs to the RRF family.

Its subcellular location is the cytoplasm. Its function is as follows. Responsible for the release of ribosomes from messenger RNA at the termination of protein biosynthesis. May increase the efficiency of translation by recycling ribosomes from one round of translation to another. In Xanthomonas campestris pv. campestris (strain 8004), this protein is Ribosome-recycling factor.